The primary structure comprises 806 residues: Protein bimA (806 aa).

TPR repeat units lie at residues 76–109 (LGCS…WTSR) and 127–160 (AAVL…NPFM). 3 disordered regions span residues 202 to 348 (VLPP…HRLG), 353 to 372 (TVSG…QGVG), and 401 to 460 (REVK…ASSK). Over residues 224-237 (AGTTRSDSTSTHGS) the composition is skewed to polar residues. Low complexity predominate over residues 246 to 257 (GSTVSVASSGTG). Positions 260–399 (LPREGMETPG…ISSTALGVKE (140 aa)) are bimA domain. Basic and acidic residues predominate over residues 328–348 (TKFESDEGHTERDAGMGHRLG). Residues 408 to 421 (TTGNKARTTTSSNV) show a composition bias toward polar residues. The span at 432 to 445 (HAGEIHDGDSKEYR) shows a compositional bias: basic and acidic residues. A compositionally biased stretch (low complexity) spans 446–459 (GTSSTSNGSQNASS). TPR repeat units lie at residues 513–546 (PWVL…APSR), 581–614 (PEAW…DPHF), 616–648 (YGFT…DSRH), 649–682 (YNAW…NPSN), 684–716 (VLIC…APHS), and 751–784 (ANVH…DPKA).

It belongs to the APC3/CDC27 family.

Its subcellular location is the nucleus. In terms of biological role, required for the completion of mitosis in Aspergillus nidulans. The protein is Protein bimA (bimA) of Emericella nidulans (strain FGSC A4 / ATCC 38163 / CBS 112.46 / NRRL 194 / M139) (Aspergillus nidulans).